Here is a 92-residue protein sequence, read N- to C-terminus: Small ribosomal subunit protein uS19 (92 aa).

It belongs to the universal ribosomal protein uS19 family.

Functionally, protein S19 forms a complex with S13 that binds strongly to the 16S ribosomal RNA. The chain is Small ribosomal subunit protein uS19 from Leuconostoc mesenteroides subsp. mesenteroides (strain ATCC 8293 / DSM 20343 / BCRC 11652 / CCM 1803 / JCM 6124 / NCDO 523 / NBRC 100496 / NCIMB 8023 / NCTC 12954 / NRRL B-1118 / 37Y).